The chain runs to 242 residues: 1-(5-phosphoribosyl)-5-[(5-phosphoribosylamino)methylideneamino] imidazole-4-carboxamide isomerase (242 aa).

Asp-8 acts as the Proton acceptor in catalysis. The active-site Proton donor is Asp-129.

The protein belongs to the HisA/HisF family.

Its subcellular location is the cytoplasm. It carries out the reaction 1-(5-phospho-beta-D-ribosyl)-5-[(5-phospho-beta-D-ribosylamino)methylideneamino]imidazole-4-carboxamide = 5-[(5-phospho-1-deoxy-D-ribulos-1-ylimino)methylamino]-1-(5-phospho-beta-D-ribosyl)imidazole-4-carboxamide. The protein operates within amino-acid biosynthesis; L-histidine biosynthesis; L-histidine from 5-phospho-alpha-D-ribose 1-diphosphate: step 4/9. The chain is 1-(5-phosphoribosyl)-5-[(5-phosphoribosylamino)methylideneamino] imidazole-4-carboxamide isomerase from Beijerinckia indica subsp. indica (strain ATCC 9039 / DSM 1715 / NCIMB 8712).